Here is a 1780-residue protein sequence, read N- to C-terminus: Chitin synthase Vb (1780 aa).

Residues Asn-133, Asn-153, Asn-629, Asn-644, Asn-655, and Asn-660 are each glycosylated (N-linked (GlcNAc...) asparagine). 2 helical membrane passes run 740–760 and 776–796; these read AWIAFVWALTFWIPSPLLKFI and FVLFFLIILINGMVVFWIIGF. The 62-residue stretch at 805–866 folds into the Cytochrome b5 heme-binding domain; that stretch reads NKAWNVKEVA…LSGMVMDNYF (62 aa). N-linked (GlcNAc...) asparagine glycans are attached at residues Asn-888 and Asn-1009. Residues 1046–1066 form a helical membrane-spanning segment; it reads LLLAFAIIICIVTAVKFLAAL. Residue Asn-1411 is glycosylated (N-linked (GlcNAc...) asparagine). The next 3 membrane-spanning stretches (helical) occupy residues 1442–1462, 1469–1489, and 1497–1517; these read LCGTIILPSTCVYIGYLIYIL, IPYISLAMIGAVYGLQALIFI, and IGWMIIYILAFPIYSFILPLY. Asn-1524 carries N-linked (GlcNAc...) asparagine glycosylation. Positions 1649 to 1691 are disordered; the sequence is TGVHDMRSQSPYQDYPGQHPSVSNLRGQANLSPATGGGHSRSG. Residues 1668–1681 are compositionally biased toward polar residues; it reads PSVSNLRGQANLSP. A DEK-C domain is found at 1722–1778; it reads GPNDMAIVESIRSVLCEVDLDTVTKKQVRALVEQRLQTELVGERRTFMDRQIDHELE.

It belongs to the chitin synthase family. Class VII subfamily.

Its subcellular location is the cell membrane. It catalyses the reaction [(1-&gt;4)-N-acetyl-beta-D-glucosaminyl](n) + UDP-N-acetyl-alpha-D-glucosamine = [(1-&gt;4)-N-acetyl-beta-D-glucosaminyl](n+1) + UDP + H(+). Functionally, polymerizes chitin, a structural polymer of the cell wall and septum, by transferring the sugar moiety of UDP-GlcNAc to the non-reducing end of the growing chitin polymer. ChsV and chsVb do perform additive, but not redundant, functions in septum formation. Functions not only in the maintenance of cell wall integrity under different osmotic conditions but also in polarized cell wall synthesis. Plays an important role in the complex infection process of this fungus. In Fusarium oxysporum f. sp. lycopersici (strain 4287 / CBS 123668 / FGSC 9935 / NRRL 34936) (Fusarium vascular wilt of tomato), this protein is Chitin synthase Vb.